Consider the following 284-residue polypeptide: Exported repetitive protein (284 aa).

A signal peptide spans 1-22 (MPNRRRRKLSTAMSAVAALAVA). At 23 to 252 (SPCAYFLVYE…MPSIMQAVQN (230 aa)) the chain is on the extracellular side. Residues 80–216 (TGSGDASTGL…SPATTSTGGG (137 aa)) form a disordered region. The span at 86-110 (STGLTGPGLTSPGLTSPGLTSPGLT) shows a compositional bias: low complexity. A run of 12 repeats spans residues 92–96 (PGLTS), 97–101 (PGLTS), 102–106 (PGLTS), 107–111 (PGLTD), 112–116 (PALTS), 117–121 (PGLTP), 144–148 (PALTN), 149–153 (PALTS), 154–158 (PTGAT), 159–163 (PGLTS), 164–168 (PTGLD), and 169–173 (PALGG). A 6 X 5 AA tandem repeats of P-[GA]-L-T-S region spans residues 92–121 (PGLTSPGLTSPGLTSPGLTDPALTSPGLTP). The 6 X 5 AA approximate tandem repeats of P-[ATG]-[LG]-X-X stretch occupies residues 144-173 (PALTNPALTSPTGATPGLTSPTGLDPALGG). Polar residues predominate over residues 145–165 (ALTNPALTSPTGATPGLTSPT). Positions 202-212 (GTIPSSPATTS) are enriched in low complexity. A helical transmembrane segment spans residues 253-273 (GGAAAPAASPPVPPIPAAAAV). At 274 to 284 (PPTDPITVPVA) the chain is on the cytoplasmic side.

The protein to M.leprae 28 kDa antigen.

It localises to the cell membrane. Functionally, surface-exposed protein required for multiplication and intracellular growth. This Mycobacterium bovis (strain ATCC BAA-935 / AF2122/97) protein is Exported repetitive protein (erp).